A 392-amino-acid chain; its full sequence is Enoyl-[acyl-carrier-protein] reductase [NADH] (392 aa).

NAD(+) is bound by residues 46–51 (GSSSGY), 72–73 (LE), 108–109 (DA), and 136–137 (VA). Tyr225 serves as a coordination point for substrate. Tyr235 (proton donor) is an active-site residue. NAD(+)-binding positions include Lys244 and 273 to 275 (LVT).

This sequence belongs to the TER reductase family. Monomer.

It catalyses the reaction a 2,3-saturated acyl-[ACP] + NAD(+) = a (2E)-enoyl-[ACP] + NADH + H(+). Its pathway is lipid metabolism; fatty acid biosynthesis. Its function is as follows. Involved in the final reduction of the elongation cycle of fatty acid synthesis (FAS II). Catalyzes the reduction of a carbon-carbon double bond in an enoyl moiety that is covalently linked to an acyl carrier protein (ACP). In Streptomyces avermitilis (strain ATCC 31267 / DSM 46492 / JCM 5070 / NBRC 14893 / NCIMB 12804 / NRRL 8165 / MA-4680), this protein is Enoyl-[acyl-carrier-protein] reductase [NADH].